Consider the following 345-residue polypeptide: Phosphate acyltransferase (345 aa).

This sequence belongs to the PlsX family. As to quaternary structure, homodimer. Probably interacts with PlsY.

The protein localises to the cytoplasm. The enzyme catalyses a fatty acyl-[ACP] + phosphate = an acyl phosphate + holo-[ACP]. It participates in lipid metabolism; phospholipid metabolism. Catalyzes the reversible formation of acyl-phosphate (acyl-PO(4)) from acyl-[acyl-carrier-protein] (acyl-ACP). This enzyme utilizes acyl-ACP as fatty acyl donor, but not acyl-CoA. This is Phosphate acyltransferase from Wolbachia pipientis wMel.